Consider the following 309-residue polypeptide: Oxygen-dependent coproporphyrinogen-III oxidase (309 aa).

A substrate-binding site is contributed by S94. Residues H98 and H108 each coordinate a divalent metal cation. H108 serves as the catalytic Proton donor. Substrate is bound at residue 110-112 (NVR). 2 residues coordinate a divalent metal cation: H147 and H177. The interval 242–277 (YVEFNLVWDRGTLFGLQTGGRTESILMSLPPLVRWE) is important for dimerization. Substrate is bound at residue 260-262 (GGR).

This sequence belongs to the aerobic coproporphyrinogen-III oxidase family. Homodimer. The cofactor is a divalent metal cation.

It is found in the cytoplasm. The enzyme catalyses coproporphyrinogen III + O2 + 2 H(+) = protoporphyrinogen IX + 2 CO2 + 2 H2O. It functions in the pathway porphyrin-containing compound metabolism; protoporphyrin-IX biosynthesis; protoporphyrinogen-IX from coproporphyrinogen-III (O2 route): step 1/1. Its function is as follows. Involved in the heme biosynthesis. Catalyzes the aerobic oxidative decarboxylation of propionate groups of rings A and B of coproporphyrinogen-III to yield the vinyl groups in protoporphyrinogen-IX. The chain is Oxygen-dependent coproporphyrinogen-III oxidase from Yersinia pestis bv. Antiqua (strain Antiqua).